Reading from the N-terminus, the 159-residue chain is Transcription elongation factor GreA (159 aa).

The protein belongs to the GreA/GreB family.

Its function is as follows. Necessary for efficient RNA polymerase transcription elongation past template-encoded arresting sites. The arresting sites in DNA have the property of trapping a certain fraction of elongating RNA polymerases that pass through, resulting in locked ternary complexes. Cleavage of the nascent transcript by cleavage factors such as GreA or GreB allows the resumption of elongation from the new 3'terminus. GreA releases sequences of 2 to 3 nucleotides. This Orientia tsutsugamushi (strain Ikeda) (Rickettsia tsutsugamushi) protein is Transcription elongation factor GreA.